The chain runs to 245 residues: MNNYKLTIQYDGARFKGWQRLGNNDNTIQGKIESVISEMVGKETEIIGCSRTDAGVHALNQVANFQSDEKLVEHKVKKYLNQYLPNDISITNVEEVHDRFHARYNSKAKTYLYKIWNEEHTNPFMRKYSMHVNKKLNVKSMKEAAKHLVGSHDFTAFSNAKSKKKSMVREVYSLEVMEEAGFVQIRVSGNGFLHNMVRKIVGALIEVGLGQLAAEAIPQILEAKQRNQINCLAEASGLYLENVEF.

Asp-53 (nucleophile) is an active-site residue. Tyr-111 contacts substrate.

Belongs to the tRNA pseudouridine synthase TruA family. In terms of assembly, homodimer.

It carries out the reaction uridine(38/39/40) in tRNA = pseudouridine(38/39/40) in tRNA. Functionally, formation of pseudouridine at positions 38, 39 and 40 in the anticodon stem and loop of transfer RNAs. This is tRNA pseudouridine synthase A 2 from Bacillus anthracis.